Here is a 503-residue protein sequence, read N- to C-terminus: Aromatase (503 aa).

A helical transmembrane segment spans residues 21–41; that stretch reads VTVSAMPLLLIMGLLLLIWNC. 2 residues coordinate substrate: D309 and M374. C437 contacts heme.

This sequence belongs to the cytochrome P450 family. Heme serves as cofactor.

It localises to the endoplasmic reticulum membrane. The protein resides in the microsome membrane. It carries out the reaction testosterone + 3 reduced [NADPH--hemoprotein reductase] + 3 O2 = 17beta-estradiol + formate + 3 oxidized [NADPH--hemoprotein reductase] + 4 H2O + 4 H(+). The enzyme catalyses androst-4-ene-3,17-dione + 3 reduced [NADPH--hemoprotein reductase] + 3 O2 = estrone + formate + 3 oxidized [NADPH--hemoprotein reductase] + 4 H2O + 4 H(+). The catalysed reaction is androst-4-ene-3,17-dione + reduced [NADPH--hemoprotein reductase] + O2 = 19-hydroxyandrost-4-ene-3,17-dione + oxidized [NADPH--hemoprotein reductase] + H2O + H(+). It catalyses the reaction 19-hydroxyandrost-4-ene-3,17-dione + reduced [NADPH--hemoprotein reductase] + O2 = 19-oxo-androst-4-ene-3,17-dione + oxidized [NADPH--hemoprotein reductase] + 2 H2O + H(+). It carries out the reaction 19-oxo-androst-4-ene-3,17-dione + reduced [NADPH--hemoprotein reductase] + O2 = estrone + formate + oxidized [NADPH--hemoprotein reductase] + H2O + 2 H(+). The enzyme catalyses estrone + reduced [NADPH--hemoprotein reductase] + O2 = 2-hydroxyestrone + oxidized [NADPH--hemoprotein reductase] + H2O + H(+). The catalysed reaction is 17beta-hydroxy-5alpha-androstan-3-one + reduced [NADPH--hemoprotein reductase] + O2 = 17beta,19-dihydroxy-3-oxo-5alpha-androstanone + oxidized [NADPH--hemoprotein reductase] + H2O + H(+). It catalyses the reaction 17beta,19-dihydroxy-3-oxo-5alpha-androstanone + reduced [NADPH--hemoprotein reductase] + O2 = 17beta-hydroxy-3,19-dioxo-5alpha-androstanone + oxidized [NADPH--hemoprotein reductase] + 2 H2O + H(+). It carries out the reaction 17beta-hydroxy-3,19-dioxo-5alpha-androstanone + reduced [NADPH--hemoprotein reductase] + O2 = 17beta-hydroxy-3-oxo-19-nor-5alpha-androst-1-ene + formate + oxidized [NADPH--hemoprotein reductase] + H2O + 2 H(+). It participates in steroid hormone biosynthesis. Its function is as follows. A cytochrome P450 monooxygenase that catalyzes the conversion of C19 androgens, androst-4-ene-3,17-dione (androstenedione) and testosterone to the C18 estrogens, estrone and estradiol, respectively. Catalyzes three successive oxidations of C19 androgens: two conventional oxidations at C19 yielding 19-hydroxy and 19-oxo/19-aldehyde derivatives, followed by a third oxidative aromatization step that involves C1-beta hydrogen abstraction combined with cleavage of the C10-C19 bond to yield a phenolic A ring and formic acid. Alternatively, the third oxidative reaction yields a 19-norsteroid and formic acid. Converts dihydrotestosterone to delta1,10-dehydro 19-nordihydrotestosterone and may play a role in homeostasis of this potent androgen. Also displays 2-hydroxylase activity toward estrone. Mechanistically, uses molecular oxygen inserting one oxygen atom into a substrate, and reducing the second into a water molecule, with two electrons provided by NADPH via cytochrome P450 reductase (CPR; NADPH-ferrihemoprotein reductase). The polypeptide is Aromatase (Cyp19a1) (Mus musculus (Mouse)).